A 198-amino-acid polypeptide reads, in one-letter code: Recombination protein RecR (198 aa).

Residues 57 to 72 (CSECQTLTDKDPCAVC) form a C4-type zinc finger. A Toprim domain is found at 80-175 (RIICVVEGVP…KVTRIAQGIP (96 aa)).

The protein belongs to the RecR family.

Functionally, may play a role in DNA repair. It seems to be involved in an RecBC-independent recombinational process of DNA repair. It may act with RecF and RecO. The sequence is that of Recombination protein RecR from Anaeromyxobacter sp. (strain Fw109-5).